The sequence spans 252 residues: Delta-like protein dsl-1 (252 aa).

The first 17 residues, 1–17 (MLKYLIFLAILISVVHS), serve as a signal peptide directing secretion. A DSL domain is found at 120–164 (IKCNRYWHGLHCDHFCNDDFARTINRRCTQNGTLGCLEGFHGPNC). Intrachain disulfides connect Cys-122/Cys-131, Cys-135/Cys-147, Cys-155/Cys-164, Cys-173/Cys-181, Cys-175/Cys-197, and Cys-199/Cys-209. Residues 169-210 (PADSCKCQNGGKCVSSLENTWAQNGSLICECRLGHFEGKHCE) form the EGF-like domain.

In terms of assembly, may interact with lin-12/Notch receptor.

Its subcellular location is the secreted. In terms of biological role, probable secreted Notch ligand involved in the mediation of Notch signaling. Involved in the lin-12/Notch pathway-mediated signaling of cell fate in vulval precursor cells (VPCs), acting redundantly with lag-2, apx-1 and osm-11. May also be involved in glp-1/Notch signaling. The protein is Delta-like protein dsl-1 of Caenorhabditis elegans.